The chain runs to 492 residues: Protein KOKOPELLI (492 aa).

Disordered regions lie at residues 218 to 354 (VTSP…RNVM) and 394 to 426 (SKFH…QHQG). A compositionally biased stretch (acidic residues) spans 256 to 270 (QETETFDDDSSETEA). Over residues 287 to 305 (STSQEYSGETGSSSGSEWE) the composition is skewed to low complexity. Over residues 317–336 (ESSYPPQNDDSVSEVSTSPP) the composition is skewed to polar residues. Basic and acidic residues-rich tracts occupy residues 337-348 (HTDRDTSREPGK) and 403-412 (KSKERKRPMS).

In terms of tissue distribution, mostly expressed in pollen and open flowers and, to a lower extent, in closed flowers.

Its function is as follows. Positively regulates reproductive function by facilitating male gametophyte formation and double fertilization. The chain is Protein KOKOPELLI from Arabidopsis thaliana (Mouse-ear cress).